We begin with the raw amino-acid sequence, 449 residues long: Mitochondrial distribution and morphology protein 10 (449 aa).

Disordered stretches follow at residues 215–244 and 282–307; these read GPSEPVEDSEKSTAAPTKTRSGVKRIDEED and DATPPSFQLPSSSPTQPSLLAHGAPS. Positions 285–301 are enriched in low complexity; sequence PPSFQLPSSSPTQPSLL.

It belongs to the MDM10 family. As to quaternary structure, component of the ER-mitochondria encounter structure (ERMES) or MDM complex, composed of MMM1, MDM10, MDM12 and MDM34. Associates with the mitochondrial outer membrane sorting assembly machinery SAM(core) complex.

It localises to the mitochondrion outer membrane. Functionally, component of the ERMES/MDM complex, which serves as a molecular tether to connect the endoplasmic reticulum and mitochondria. Components of this complex are involved in the control of mitochondrial shape and protein biogenesis and may function in phospholipid exchange. MDM10 is involved in the late assembly steps of the general translocase of the mitochondrial outer membrane (TOM complex). Functions in the TOM40-specific route of the assembly of outer membrane beta-barrel proteins, including the association of TOM40 with the receptor TOM22 and small TOM proteins. Can associate with the SAM(core) complex as well as the MDM12-MMM1 complex, both involved in late steps of the major beta-barrel assembly pathway, that is responsible for biogenesis of all outer membrane beta-barrel proteins. May act as a switch that shuttles between both complexes and channels precursor proteins into the TOM40-specific pathway. Plays a role in mitochondrial morphology and in the inheritance of mitochondria. The polypeptide is Mitochondrial distribution and morphology protein 10 (Postia placenta (strain ATCC 44394 / Madison 698-R) (Brown rot fungus)).